We begin with the raw amino-acid sequence, 172 residues long: Translation initiation factor IF-3 (172 aa).

This sequence belongs to the IF-3 family. As to quaternary structure, monomer.

It is found in the cytoplasm. In terms of biological role, IF-3 binds to the 30S ribosomal subunit and shifts the equilibrium between 70S ribosomes and their 50S and 30S subunits in favor of the free subunits, thus enhancing the availability of 30S subunits on which protein synthesis initiation begins. This Oceanobacillus iheyensis (strain DSM 14371 / CIP 107618 / JCM 11309 / KCTC 3954 / HTE831) protein is Translation initiation factor IF-3.